Here is a 1014-residue protein sequence, read N- to C-terminus: Endogenous retrovirus group K member 10 Pol protein (1014 aa).

One can recognise a Reverse transcriptase domain in the interval Leu57–Ile245. An LPQG motif is present at residues Leu161–Gly164. Positions Tyr195–Asp198 match the YXDD motif. One can recognise an RNase H type-1 domain in the interval Leu460–Ile590. Mg(2+) contacts are provided by Asp469, Glu497, Asp517, and Asp582. An Integrase-type zinc finger spans residues Ser587 to Gln628. Zn(2+)-binding residues include His596, His600, Cys624, and Cys627. The Integrase catalytic domain occupies Arg642–Lys803. Positions Lys811 to Glu859 form a DNA-binding region, integrase-type.

It belongs to the beta type-B retroviral polymerase family. HERV class-II K(HML-2) pol subfamily.

It catalyses the reaction DNA(n) + a 2'-deoxyribonucleoside 5'-triphosphate = DNA(n+1) + diphosphate. The enzyme catalyses Endonucleolytic cleavage to 5'-phosphomonoester.. Functionally, early post-infection, the reverse transcriptase converts the viral RNA genome into double-stranded viral DNA. The RNase H domain of the reverse transcriptase performs two functions. It degrades the RNA template and specifically removes the RNA primer from the RNA/DNA hybrid. Following nuclear import, the integrase catalyzes the insertion of the linear, double-stranded viral DNA into the host cell chromosome. Endogenous Pol proteins may have kept, lost or modified their original function during evolution. This is Endogenous retrovirus group K member 10 Pol protein (ERVK-10) from Homo sapiens (Human).